Reading from the N-terminus, the 272-residue chain is 1,4-dihydroxy-2-naphthoyl-CoA synthase (272 aa).

Substrate contacts are provided by residues Arg33, 72 to 76, Tyr84, 116 to 120, Thr142, Ser148, Tyr245, and Lys260; these read SGGDQ and YAIGG. 141–143 contributes to the hydrogencarbonate binding site; sequence QTG. Over residues 253-264 the composition is skewed to basic and acidic residues; that stretch reads GRDAFKEKRDPD. The segment at 253–272 is disordered; it reads GRDAFKEKRDPDFDQFPKFP.

This sequence belongs to the enoyl-CoA hydratase/isomerase family. MenB subfamily. Hydrogencarbonate serves as cofactor.

It carries out the reaction 2-succinylbenzoyl-CoA + H(+) = 1,4-dihydroxy-2-naphthoyl-CoA + H2O. Its pathway is quinol/quinone metabolism; 1,4-dihydroxy-2-naphthoate biosynthesis; 1,4-dihydroxy-2-naphthoate from chorismate: step 6/7. It functions in the pathway quinol/quinone metabolism; menaquinone biosynthesis. Functionally, converts o-succinylbenzoyl-CoA (OSB-CoA) to 1,4-dihydroxy-2-naphthoyl-CoA (DHNA-CoA). The polypeptide is 1,4-dihydroxy-2-naphthoyl-CoA synthase (Staphylococcus haemolyticus (strain JCSC1435)).